The sequence spans 303 residues: Dipeptide transport system permease protein DppB (303 aa).

7 helical membrane passes run 9–29 (LGLLLLTLFLIVTLTFFMMQV), 62–82 (YFIYVGHMFTGNFGTSFIYTN), 93–113 (LPVSMQLGTQALILGTVLGAL), 129–149 (IFGFLSVLGISVPSFVIGTLI), 166–186 (GTFSQTIMPTIALSFAPMAVV), 227–247 (IPMLTLIGPMAAGLLTGSVLI), and 269–289 (FPVIMATTIVYAVILMVFILV). Residues 93–290 (LPVSMQLGTQ…VILMVFILVT (198 aa)) enclose the ABC transmembrane type-1 domain.

This sequence belongs to the binding-protein-dependent transport system permease family. OppBC subfamily. As to quaternary structure, the complex is composed of two ATP-binding proteins (DppD and DppF), two transmembrane proteins (DppB and DppC) and a solute-binding protein (DppA).

Its subcellular location is the cell membrane. Part of the ABC transporter DppABCDF involved in dipeptide transport. Responsible for the translocation of the substrate across the membrane. The sequence is that of Dipeptide transport system permease protein DppB from Lactococcus lactis subsp. cremoris (strain MG1363).